Reading from the N-terminus, the 591-residue chain is L-fucose isomerase (591 aa).

Active-site proton acceptor residues include Glu-337 and Asp-361. The Mn(2+) site is built by Glu-337, Asp-361, and His-528.

The protein belongs to the L-fucose isomerase family. In terms of assembly, homohexamer. Mn(2+) serves as cofactor.

The protein resides in the cytoplasm. The catalysed reaction is L-fucose = L-fuculose. The protein operates within carbohydrate degradation; L-fucose degradation; L-lactaldehyde and glycerone phosphate from L-fucose: step 1/3. Its function is as follows. Converts the aldose L-fucose into the corresponding ketose L-fuculose. The chain is L-fucose isomerase from Salmonella heidelberg (strain SL476).